A 58-amino-acid chain; its full sequence is UPF0337 protein CE1672 (58 aa).

Basic and acidic residues predominate over residues 1–39; that stretch reads MGLGDKIRNTAEKASGKVKEATGKATDNEKLEAEGKTDQ. The tract at residues 1-58 is disordered; the sequence is MGLGDKIRNTAEKASGKVKEATGKATDNEKLEAEGKTDQFKGNAKNTVENAKDTLRGN.

Belongs to the UPF0337 (CsbD) family.

The polypeptide is UPF0337 protein CE1672 (Corynebacterium efficiens (strain DSM 44549 / YS-314 / AJ 12310 / JCM 11189 / NBRC 100395)).